The chain runs to 40 residues: Photosystem II reaction center protein J (40 aa).

A helical transmembrane segment spans residues 8–28 (IPLWLIGTVTGIPVIGSIGIF).

It belongs to the PsbJ family. In terms of assembly, PSII is composed of 1 copy each of membrane proteins PsbA, PsbB, PsbC, PsbD, PsbE, PsbF, PsbH, PsbI, PsbJ, PsbK, PsbL, PsbM, PsbT, PsbX, PsbY, PsbZ, Psb30/Ycf12, at least 3 peripheral proteins of the oxygen-evolving complex and a large number of cofactors. It forms dimeric complexes.

The protein resides in the plastid. The protein localises to the chloroplast thylakoid membrane. One of the components of the core complex of photosystem II (PSII). PSII is a light-driven water:plastoquinone oxidoreductase that uses light energy to abstract electrons from H(2)O, generating O(2) and a proton gradient subsequently used for ATP formation. It consists of a core antenna complex that captures photons, and an electron transfer chain that converts photonic excitation into a charge separation. This Chloranthus spicatus (Chulantree) protein is Photosystem II reaction center protein J.